A 283-amino-acid polypeptide reads, in one-letter code: Release factor glutamine methyltransferase (283 aa).

S-adenosyl-L-methionine contacts are provided by residues 121–125 (GTGSG), Asp144, and Asn188. 188–191 (NPPY) is a substrate binding site.

This sequence belongs to the protein N5-glutamine methyltransferase family. PrmC subfamily.

It catalyses the reaction L-glutaminyl-[peptide chain release factor] + S-adenosyl-L-methionine = N(5)-methyl-L-glutaminyl-[peptide chain release factor] + S-adenosyl-L-homocysteine + H(+). Methylates the class 1 translation termination release factors RF1/PrfA and RF2/PrfB on the glutamine residue of the universally conserved GGQ motif. The chain is Release factor glutamine methyltransferase from Bacillus cereus (strain ATCC 14579 / DSM 31 / CCUG 7414 / JCM 2152 / NBRC 15305 / NCIMB 9373 / NCTC 2599 / NRRL B-3711).